A 59-amino-acid polypeptide reads, in one-letter code: Crassipeptide cce9a (59 aa).

A propeptide spanning residues 1 to 30 (ADNHARVAGPRAVASGRYATEKAFLQMMTR) is cleaved from the precursor.

In terms of processing, contains 3 disulfide bonds. Expressed by the venom duct.

Its subcellular location is the secreted. In terms of biological role, crassispirid snail peptide that induces sleep-like symptoms in young mice (12 and 14 days) and hyperactivity in older mice (16 days), when intracranially injected. This chain is Crassipeptide cce9a, found in Crassispira cerithina (Sea snail).